Consider the following 207-residue polypeptide: MGKIWSKSSLVGWPEIRERIRRQTPEPAVGVGAVSQDLANRGAITTSNTKDNNQTVAWLEAQEEZEVGFPVRPQVPLRPMTYKAAFDLSFFLKEKGGLEGLVWSRKRQEILDLWVYHTQGFFPDWQNYTPGPGVRYPLCFGWCFKLVPLSEEAVEEANEGDNNALLHPICQHGVDDDHKQVLVWRFDSSLARRHVAKELHPDFYKNC.

A lipid anchor (N-myristoyl glycine; by host) is attached at glycine 2. Phosphoserine; by host is present on serine 6. The segment at 63 to 66 (EEZE) is acidic; interacts with host PACS1 and PACS2; stabilizes the interaction of NEF/MHC-I with host AP1M1; necessary for MHC-I internalization. The tract at residues 70-79 (PVRPQVPLRP) is SH3-binding; interaction with Src family tyrosine kinases. The PxxP; stabilizes the interaction of NEF/MHC-I with host AP1M1; necessary for MHC-I internalization motif lies at 73-76 (PQVP). The segment at 109–125 (EILDLWVYHTQGFFPDW) is mediates dimerization, Nef-PTE1 interaction. Residues 149-181 (LSEEAVEEANEGDNNALLHPICQHGVDDDHKQV) are binding to ATP6V1H. The Dileucine internalization motif; necessary for CD4 internalization signature appears at 165-166 (LL). A Diacidic; necessary for CD4 internalization motif is present at residues 175-176 (DD).

It belongs to the lentivirus primate group Nef protein family. In terms of assembly, monomer; cytosolic form. Homodimer; membrane bound form. Interacts with Nef associated p21-activated kinase (PAK2); this interaction activates PAK2. Associates with the Nef-MHC-I-AP1 complex; this complex is required for MHC-I internalization. Interacts (via C-terminus) with host PI3-kinase. Interacts with host PACS1; this interaction seems to be weak. Interacts with host PACS2. Interacts with host LCK and MAPK3; these interactions inhibit the kinase activity of the latter. Interacts with host ATP6V1H; this interaction may play a role in CD4 endocytosis. Associates with the CD4-Nef-AP2 complex; this complex is required for CD4 internalization. Interacts with host AP2 subunit alpha and AP2 subunit sigma2. Interacts with TCR-zeta chain; this interaction up-regulates the Fas ligand (FasL) surface expression. Interacts with host HCK, LYN, and SRC; these interactions activate the Src family kinases. Interacts with MAP3K5; this interaction inhibits the Fas and TNFR-mediated death signals. Interacts with beta-COP and PTE1. Interacts with human RACK1; this increases Nef phosphorylation by PKC. Interacts with TP53; this interaction decreases the half-life of TP53, protecting the infected cell against p53-mediated apoptosis. Post-translationally, the virion-associated Nef proteins are cleaved by the viral protease to release the soluble C-terminal core protein. Nef is probably cleaved concomitantly with viral structural proteins on maturation of virus particles. Myristoylated. In terms of processing, phosphorylated on serine residues, probably by host PKCdelta and theta.

The protein localises to the host cell membrane. Its subcellular location is the virion. The protein resides in the secreted. It is found in the host Golgi apparatus membrane. Its function is as follows. Factor of infectivity and pathogenicity, required for optimal virus replication. Alters numerous pathways of T-lymphocyte function and down-regulates immunity surface molecules in order to evade host defense and increase viral infectivity. Alters the functionality of other immunity cells, like dendritic cells, monocytes/macrophages and NK cells. Functionally, in infected CD4(+) T-lymphocytes, down-regulates the surface MHC-I, mature MHC-II, CD4, CD28, CCR5 and CXCR4 molecules. Mediates internalization and degradation of host CD4 through the interaction of with the cytoplasmic tail of CD4, the recruitment of AP-2 (clathrin adapter protein complex 2), internalization through clathrin coated pits, and subsequent transport to endosomes and lysosomes for degradation. Diverts host MHC-I molecules to the trans-Golgi network-associated endosomal compartments by an endocytic pathway to finally target them for degradation. MHC-I down-regulation may involve AP-1 (clathrin adapter protein complex 1) or possibly Src family kinase-ZAP70/Syk-PI3K cascade recruited by PACS2. In consequence infected cells are masked for immune recognition by cytotoxic T-lymphocytes. Decreasing the number of immune receptors also prevents reinfection by more HIV particles (superinfection). Down-regulates host SERINC3 and SERINC5 thereby excluding these proteins from the viral particles. Virion infectivity is drastically higher when SERINC3 or SERINC5 are excluded from the viral envelope, because these host antiviral proteins impair the membrane fusion event necessary for subsequent virion penetration. In terms of biological role, bypasses host T-cell signaling by inducing a transcriptional program nearly identical to that of anti-CD3 cell activation. Interaction with TCR-zeta chain up-regulates the Fas ligand (FasL). Increasing surface FasL molecules and decreasing surface MHC-I molecules on infected CD4(+) cells send attacking cytotoxic CD8+ T-lymphocytes into apoptosis. Plays a role in optimizing the host cell environment for viral replication without causing cell death by apoptosis. Protects the infected cells from apoptosis in order to keep them alive until the next virus generation is ready to strike. Inhibits the Fas and TNFR-mediated death signals by blocking MAP3K5/ASK1. Decreases the half-life of TP53, protecting the infected cell against p53-mediated apoptosis. Inhibits the apoptotic signals regulated by the Bcl-2 family proteins through the formation of a Nef/PI3-kinase/PAK2 complex that leads to activation of PAK2 and induces phosphorylation of host BAD. Its function is as follows. Extracellular Nef protein targets CD4(+) T-lymphocytes for apoptosis by interacting with CXCR4 surface receptors. This Homo sapiens (Human) protein is Protein Nef.